The chain runs to 1020 residues: Mastermind-like protein 1 (1020 aa).

A required for interaction with NOTCH proteins region spans residues 1–97 (MVLPTCPMAE…PAPASAPAAA (97 aa)). Ser-45 carries the post-translational modification Phosphoserine. The segment covering 67–76 (KAKRAGKHRQ) has biased composition (basic residues). The segment at 67–191 (KAKRAGKHRQ…TAGKHSLGLD (125 aa)) is disordered. Low complexity predominate over residues 77–99 (PPAAATAPVAAPAPASAPAAARL). Residues 100 to 122 (DAADGPEHGRPVAHLHDTVKRSL) show a composition bias toward basic and acidic residues. Over residues 124-133 (SAASPQNGDQ) the composition is skewed to polar residues. Ser-127, Ser-310, Ser-321, and Ser-367 each carry phosphoserine. 6 disordered regions span residues 335 to 522 (GASS…YGNT), 575 to 598 (PFRSLVPPGQEQNPSSVPVAAPAA), 663 to 686 (EKQQFQRHLTRPPPQYQDPTQSTF), 725 to 748 (SMGPGHAPVSSLPSSSGQQDRGVA), 794 to 866 (QNAS…NPFT), and 888 to 959 (AMPS…RPGL). Polar residues predominate over residues 344-369 (DSPSLGSSQTLFHTTSQPGVDNSSPN). The span at 373 to 383 (ASAQAQSAQRA) shows a compositional bias: low complexity. Polar residues predominate over residues 399–410 (ELSSAHQLQQIA). Over residues 419–435 (LQNPQQAAPAPGPGQLA) the composition is skewed to low complexity. Residues 491-515 (PSHSNLLSHQSPSNLNQNPVNNQGS) show a composition bias toward polar residues. A compositionally biased stretch (low complexity) spans 588–598 (PSSVPVAAPAA). Residues 794–818 (QNASTSAAYGQNSLGSASLSQQHSK) show a composition bias toward polar residues. Lys-827 bears the N6-acetyllysine mark. Positions 837–864 (MGSQNASWQHQGMPNLSSQTSGNSSVNP) are enriched in polar residues. The segment covering 911 to 920 (SAQQRNSAPA) has biased composition (low complexity). Residue Ser-1019 is modified to Phosphoserine.

The protein belongs to the mastermind family. Interacts (via N-terminus) with NOTCH1, NOTCH2, NOTCH3 and NOTCH4 (via ankyrin repeat region). Interacts (via N-terminus) with p53 (via DNA-binding region). Forms a DNA-binding complex with Notch proteins and RBPSUH/RBP-J kappa/CBF1. Also binds CREBBP/CBP and CDK8. Forms a complex with PRAG1, NOTCH1 and MAML1, in a MAML1-dependent manner. At E9.5, strongly expressed in the telencephalon, first branchial arch, forelimb buds and somites. By 10.5 dpc, continuously expressed in brain and spinal cord. Also expressed in first and second branchial arches and limb buds. By 11.5 dpc, expression in CNS is weak but increases in mesodermal tissues. At 14.5 dpc, detected in epithelial cells in trachea, esophagus and proximal and distal tubules of the developing lungs.

Its subcellular location is the nucleus speckle. Its function is as follows. Acts as a transcriptional coactivator for NOTCH proteins. Has been shown to amplify NOTCH-induced transcription of HES1. Enhances phosphorylation and proteolytic turnover of the NOTCH intracellular domain in the nucleus through interaction with CDK8. Binds to CREBBP/CBP which promotes nucleosome acetylation at NOTCH enhancers and activates transcription. Induces phosphorylation and localization of CREBBP to nuclear foci. Plays a role in hematopoietic development by regulating NOTCH-mediated lymphoid cell fate decisions. The sequence is that of Mastermind-like protein 1 from Mus musculus (Mouse).